Here is a 197-residue protein sequence, read N- to C-terminus: Glycerol-3-phosphate acyltransferase (197 aa).

The next 4 helical transmembrane spans lie at 1–21 (MTAL…GLLV), 69–89 (LPML…AVVG), 110–130 (VMLF…LVVL), and 152–172 (VFFT…SFIF).

Belongs to the PlsY family. Probably interacts with PlsX.

It localises to the cell membrane. It carries out the reaction an acyl phosphate + sn-glycerol 3-phosphate = a 1-acyl-sn-glycero-3-phosphate + phosphate. It functions in the pathway lipid metabolism; phospholipid metabolism. Functionally, catalyzes the transfer of an acyl group from acyl-phosphate (acyl-PO(4)) to glycerol-3-phosphate (G3P) to form lysophosphatidic acid (LPA). This enzyme utilizes acyl-phosphate as fatty acyl donor, but not acyl-CoA or acyl-ACP. This is Glycerol-3-phosphate acyltransferase from Geobacillus kaustophilus (strain HTA426).